The chain runs to 229 residues: Enolase-phosphatase E1 (229 aa).

The protein belongs to the HAD-like hydrolase superfamily. MasA/MtnC family. As to quaternary structure, monomer. Mg(2+) serves as cofactor.

The enzyme catalyses 5-methylsulfanyl-2,3-dioxopentyl phosphate + H2O = 1,2-dihydroxy-5-(methylsulfanyl)pent-1-en-3-one + phosphate. Its pathway is amino-acid biosynthesis; L-methionine biosynthesis via salvage pathway; L-methionine from S-methyl-5-thio-alpha-D-ribose 1-phosphate: step 3/6. It participates in amino-acid biosynthesis; L-methionine biosynthesis via salvage pathway; L-methionine from S-methyl-5-thio-alpha-D-ribose 1-phosphate: step 4/6. In terms of biological role, bifunctional enzyme that catalyzes the enolization of 2,3-diketo-5-methylthiopentyl-1-phosphate (DK-MTP-1-P) into the intermediate 2-hydroxy-3-keto-5-methylthiopentenyl-1-phosphate (HK-MTPenyl-1-P), which is then dephosphorylated to form the acireductone 1,2-dihydroxy-3-keto-5-methylthiopentene (DHK-MTPene). The polypeptide is Enolase-phosphatase E1 (Enterobacter sp. (strain 638)).